A 347-amino-acid chain; its full sequence is Isopentenyl-diphosphate delta-isomerase (347 aa).

9–10 (RK) is a substrate binding site. Residues S67, 68–70 (SMT), S98, and N127 contribute to the FMN site. Residue 98–100 (SQR) participates in substrate binding. Q162 serves as a coordination point for substrate. Residue E163 coordinates Mg(2+). Residues K194, T224, 274 to 276 (GIK), and 295 to 296 (AA) contribute to the FMN site.

It belongs to the IPP isomerase type 2 family. Homooctamer. Dimer of tetramers. FMN serves as cofactor. The cofactor is NADPH. It depends on Mg(2+) as a cofactor.

The protein resides in the cytoplasm. The catalysed reaction is isopentenyl diphosphate = dimethylallyl diphosphate. Its function is as follows. Involved in the biosynthesis of isoprenoids. Catalyzes the 1,3-allylic rearrangement of the homoallylic substrate isopentenyl (IPP) to its allylic isomer, dimethylallyl diphosphate (DMAPP). This is Isopentenyl-diphosphate delta-isomerase from Pseudescherichia vulneris (Escherichia vulneris).